The chain runs to 297 residues: MVEVRVPATSANIGPGFDCLGVAVNIYNKFFVEEIEDGLIFEGCADKFKNENNLIYVAMKKCFDKIGYKPTGLRIKIESDIPVSRGLGSSAACVVGGIVSANELAGGALNKKELLDLAVEVEGHPDNVNPAFCGGMTASISDNREVIYSKVKVSEGIKFCALIPDFTLSTEKARAVLPKSIDYKDGIFNVGRTALMISALNNGDFHLIKYACKDKLHQDYRAKLIENFYSIKKQCEKLNSLGVFLSGAGPTIMVMLREEDKDFSKNIKSFLETLKNKWEVRELKIDKLGTVVNNRKL.

82-92 is an ATP binding site; it reads PVSRGLGSSAA.

This sequence belongs to the GHMP kinase family. Homoserine kinase subfamily.

It localises to the cytoplasm. The catalysed reaction is L-homoserine + ATP = O-phospho-L-homoserine + ADP + H(+). It participates in amino-acid biosynthesis; L-threonine biosynthesis; L-threonine from L-aspartate: step 4/5. Functionally, catalyzes the ATP-dependent phosphorylation of L-homoserine to L-homoserine phosphate. The polypeptide is Homoserine kinase (Clostridium botulinum (strain Okra / Type B1)).